A 42-amino-acid polypeptide reads, in one-letter code: Kappa-actitoxin-Ael2a (42 aa).

Disulfide bonds link cysteine 4/cysteine 37, cysteine 6/cysteine 30, and cysteine 20/cysteine 38.

This sequence belongs to the sea anemone type 3 (BDS) potassium channel toxin family.

The protein localises to the secreted. It is found in the nematocyst. Peptide with both antimicrobial and neurotoxin activities. This toxin acts both on ERG potassium channels and sodium channels. It potently and reversibly inhibits human Kv11.1/KCNH2/ERG1 (IC(50)=34 nM), rat Kv11.1/KCNH2/ERG1 and Kv11.3/KCNH7/ERG3 voltage-gated potassium channels in a similar potency. It acts as a gating-modifier toxin that shifts the voltage-dependence of ERG activation in the positive direction and suppresses its current amplitudes elicited by strong depolarizing pulses. On sodium channels, it blocks Nav1.2/SCN2A (EC(50)=31 nM), Nav1.3/SCN3A, Nav1.4/SCN4A, Nav1.5/SCN5A, Nav1.6/SCN8A, Nav1.8/SCN10A (EC(50)=92 nM). It may act by binding at site 1 or close by, only when the pore is in an open configuration. Shows antibacterial activity against the Gram-negative bacterium S.typhimurium, but not on the bacteria B.subtilis, S.aureus, and P.aeruginosa. In vivo, this toxin does not induce neurotoxic symptoms when injected into mice. The protein is Kappa-actitoxin-Ael2a of Anthopleura elegantissima (Green aggregating anemone).